A 79-amino-acid chain; its full sequence is RNA-binding protein KhpA (79 aa).

The 50-residue stretch at 30-79 (GRVLEVRVHPDDLGKVIGRNGRTARALRTVVGAIGGRGVRVDLVDVDHVR) folds into the KH domain.

This sequence belongs to the KhpA RNA-binding protein family.

It localises to the cytoplasm. It is found in the nucleoid. Functionally, a probable RNA-binding protein. This Streptomyces coelicolor (strain ATCC BAA-471 / A3(2) / M145) protein is RNA-binding protein KhpA.